The following is a 57-amino-acid chain: Large ribosomal subunit protein bL32 (57 aa).

Residues 1–20 form a disordered region; that stretch reads MAVQQRRVSKSRKGMRRSHD. Residues 7-19 are compositionally biased toward basic residues; it reads RVSKSRKGMRRSH.

The protein belongs to the bacterial ribosomal protein bL32 family.

This Ureaplasma urealyticum serovar 10 (strain ATCC 33699 / Western) protein is Large ribosomal subunit protein bL32.